A 378-amino-acid chain; its full sequence is Succinyl-diaminopimelate desuccinylase (378 aa).

Histidine 68 serves as a coordination point for Zn(2+). Aspartate 70 is an active-site residue. Aspartate 101 lines the Zn(2+) pocket. Catalysis depends on glutamate 135, which acts as the Proton acceptor. Glutamate 136, glutamate 164, and histidine 350 together coordinate Zn(2+).

The protein belongs to the peptidase M20A family. DapE subfamily. As to quaternary structure, homodimer. Zn(2+) serves as cofactor. It depends on Co(2+) as a cofactor.

It carries out the reaction N-succinyl-(2S,6S)-2,6-diaminopimelate + H2O = (2S,6S)-2,6-diaminopimelate + succinate. It participates in amino-acid biosynthesis; L-lysine biosynthesis via DAP pathway; LL-2,6-diaminopimelate from (S)-tetrahydrodipicolinate (succinylase route): step 3/3. In terms of biological role, catalyzes the hydrolysis of N-succinyl-L,L-diaminopimelic acid (SDAP), forming succinate and LL-2,6-diaminopimelate (DAP), an intermediate involved in the bacterial biosynthesis of lysine and meso-diaminopimelic acid, an essential component of bacterial cell walls. The polypeptide is Succinyl-diaminopimelate desuccinylase (Vibrio parahaemolyticus serotype O3:K6 (strain RIMD 2210633)).